We begin with the raw amino-acid sequence, 107 residues long: Sperm-specific class P protein 32 (107 aa).

The disordered stretch occupies residues 1–20; the sequence is MLTIEPPSATFPASGGSSTH. Positions 1–107 constitute an MSP domain; that stretch reads MLTIEPPSAT…GDVTILLKTN (107 aa).

As to expression, expressed at higher level in testis.

The protein is Sperm-specific class P protein 32 (ssp-32) of Caenorhabditis elegans.